Reading from the N-terminus, the 117-residue chain is Small ribosomal subunit protein uS17 (117 aa).

Belongs to the universal ribosomal protein uS17 family. As to quaternary structure, part of the 30S ribosomal subunit.

In terms of biological role, one of the primary rRNA binding proteins, it binds specifically to the 5'-end of 16S ribosomal RNA. This chain is Small ribosomal subunit protein uS17, found in Methanocaldococcus jannaschii (strain ATCC 43067 / DSM 2661 / JAL-1 / JCM 10045 / NBRC 100440) (Methanococcus jannaschii).